The primary structure comprises 66 residues: Early E3 7.7 kDa protein (66 aa).

Asn7 and Asn24 each carry an N-linked (GlcNAc...) asparagine; by host glycan. A helical membrane pass occupies residues Ile44 to Ser64.

The protein resides in the host nucleus membrane. The sequence is that of Early E3 7.7 kDa protein from Human adenovirus B serotype 7 (HAdV-7).